The sequence spans 104 residues: Nucleoid-associated protein Moth_0028 (104 aa).

This sequence belongs to the YbaB/EbfC family. As to quaternary structure, homodimer.

The protein resides in the cytoplasm. Its subcellular location is the nucleoid. Functionally, binds to DNA and alters its conformation. May be involved in regulation of gene expression, nucleoid organization and DNA protection. This chain is Nucleoid-associated protein Moth_0028, found in Moorella thermoacetica (strain ATCC 39073 / JCM 9320).